The chain runs to 369 residues: MGDWSFLGEFLEEVHKHSTVVGKVWLTVLFIFRMLVLGTAAGPLWGDEQSDFMCDTQQPGCENVCYDKAFPISHVRFWVLQIIFVSTPSLVYMGHAMHTVRMEEKRKMKEAEREAQEMKNSGDTYYQQKCPVAEKTELSCWDESGGKIILRGSLLNTYVYSILIRTAMEIAFIVGQYILYGIFLETLYICQRAPCPHPVNCYVSRPTEKNVFIIFMLAVAVLSLFLSLAELYHLGWKKAKERCSRAYKPSPSTAPRRLESAPQVERAQMYTPPPDFNQCLASPNGKFISPFSNKMASQQNTANFATERVHSQEDAAGEGPFMKSSYMESPEVASECAAPALPESYFNEKRRFSKASRASSKARSDDLSV.

The Cytoplasmic segment spans residues 2–19; it reads GDWSFLGEFLEEVHKHST. The chain crosses the membrane as a helical span at residues 20–40; the sequence is VVGKVWLTVLFIFRMLVLGTA. Residues 41–76 lie on the Extracellular side of the membrane; that stretch reads AGPLWGDEQSDFMCDTQQPGCENVCYDKAFPISHVR. A helical transmembrane segment spans residues 77 to 97; it reads FWVLQIIFVSTPSLVYMGHAM. The Cytoplasmic segment spans residues 98–169; sequence HTVRMEEKRK…YSILIRTAME (72 aa). Residues 170–190 form a helical membrane-spanning segment; that stretch reads IAFIVGQYILYGIFLETLYIC. The Extracellular segment spans residues 191–210; sequence QRAPCPHPVNCYVSRPTEKN. Residues 211 to 231 form a helical membrane-spanning segment; sequence VFIIFMLAVAVLSLFLSLAEL. The Cytoplasmic segment spans residues 232 to 369; that stretch reads YHLGWKKAKE…SKARSDDLSV (138 aa). Positions 347-369 are disordered; that stretch reads NEKRRFSKASRASSKARSDDLSV.

This sequence belongs to the connexin family. Alpha-type (group II) subfamily. A connexon is composed of a hexamer of connexins. Mostly in heart, and in the whole embryo, liver, stomach, and pectoral muscle.

It localises to the cell membrane. Its subcellular location is the cell junction. It is found in the gap junction. Functionally, one gap junction consists of a cluster of closely packed pairs of transmembrane channels, the connexons, through which materials of low MW diffuse from one cell to a neighboring cell. The protein is Gap junction alpha-5 protein (GJA5) of Gallus gallus (Chicken).